Here is a 3262-residue protein sequence, read N- to C-terminus: Striated muscle-specific serine/threonine-protein kinase (3262 aa).

The disordered stretch occupies residues 1-33; that stretch reads MQKARGTRGEDAGTRAPPSPGVPPKRAKVGAGR. Arginine 33 bears the Omega-N-methylarginine mark. Residues 45–126 enclose the Ig-like 1 domain; it reads PVFLRPLKNA…GQASCEAVLT (82 aa). Serine 141 bears the Phosphoserine mark. 4 disordered regions span residues 155 to 185, 198 to 226, 280 to 720, and 814 to 875; these read RAFS…TSEE, EQEA…GPRH, GLHR…VSAG, and LAVR…APPT. The segment covering 158 to 185 has biased composition (polar residues); it reads STPTGGSDTLVGTSLDTPPTSVTGTSEE. Positions 301-317 are enriched in pro residues; the sequence is PALPPPSKSALLPPPSP. A phosphoserine mark is found at serine 368 and serine 375. Threonine 379 bears the Phosphothreonine mark. Phosphoserine is present on residues serine 382 and serine 385. A compositionally biased stretch (basic and acidic residues) spans 404 to 422; that stretch reads ILDKLQFFEERRRSLERSD. Serine 423 carries the phosphoserine modification. Threonine 453 carries the phosphothreonine modification. 5 positions are modified to phosphoserine: serine 457, serine 463, serine 493, serine 511, and serine 531. Residues 459-473 show a composition bias toward basic and acidic residues; sequence EELRSPRGSVAERRR. The span at 510 to 522 shows a compositional bias: basic and acidic residues; the sequence is TSREELVRSHESL. Polar residues predominate over residues 543–552; it reads RPSTPKTSRA. Serine 554 carries the phosphoserine modification. Basic and acidic residues-rich tracts occupy residues 624–638 and 663–680; these read PESR…KREP and EKNR…RGPE. In terms of domain architecture, Ig-like 2 spans 727–815; sequence PVFEIPLQNM…GQATCASSLA (89 aa). Positions 820–830 are enriched in polar residues; sequence GSTSPFSSPIT. Ig-like domains are found at residues 874–963, 968–1062, and 1069–1157; these read PTFK…ARLE, PESR…ARLT, and PLFT…AQLY. Cysteine 994 and cysteine 1046 form a disulfide bridge. Residues serine 1133 and serine 1177 each carry the phosphoserine modification. The interval 1162–1185 is disordered; the sequence is RTAASGPSSKLEKMPSIPEEPEHG. The 91-residue stretch at 1193-1283 folds into the Ig-like 6 domain; sequence PDFLRPLQDL…AACYAHLYVT (91 aa). The region spanning 1290-1387 is the Fibronectin type-III 1 domain; that stretch reads PDGAPEVVAV…PSEPVQLLEH (98 aa). 2 Ig-like domains span residues 1389–1485 and 1490–1578; these read PPLE…VTLE and PRFE…AELS. The cysteines at positions 1413 and 1469 are disulfide-linked. Residues 1606–1859 form the Protein kinase 1 domain; that stretch reads YDIHQEIGRG…AEETLEHPWF (254 aa). Residues 1612–1620 and lysine 1635 each bind ATP; that span reads IGRGAFSYL. The active-site Proton acceptor is the aspartate 1724. Positions 1913-2571 are disordered; it reads MPRRQPPSGG…SQPNLSSSVQ (659 aa). The segment covering 1918 to 1927 has biased composition (low complexity); sequence PPSGGLSSSS. Positions 1980–1990 are enriched in basic and acidic residues; sequence EQERTPSKDQE. Serine 1993, serine 2004, serine 2019, serine 2020, and serine 2042 each carry phosphoserine. Residues 2009–2019 show a composition bias toward basic and acidic residues; sequence SPRRPELRRGS. Residue arginine 2060 is modified to Asymmetric dimethylarginine; alternate. An Omega-N-methylarginine; alternate modification is found at arginine 2060. Over residues 2069-2081 the composition is skewed to low complexity; it reads AQRLQALRQRLLR. Residues serine 2114 and serine 2135 each carry the phosphoserine modification. Arginine 2144 carries the omega-N-methylarginine modification. The span at 2168-2179 shows a compositional bias: polar residues; the sequence is ESPSLSALSETQ. Phosphoserine occurs at positions 2182 and 2207. A compositionally biased stretch (polar residues) spans 2193 to 2207; it reads ITKSPEPSAVTSRDS. The span at 2208 to 2218 shows a compositional bias: pro residues; the sequence is PQPPEPQPVPE. Positions 2219-2229 are enriched in basic and acidic residues; the sequence is KVPEPKPEPVR. The span at 2230-2268 shows a compositional bias: low complexity; it reads AAKPAQPPLALQMPTQPLTPYAQIMQSLQLSSPTLSPQD. A compositionally biased stretch (basic and acidic residues) spans 2337-2348; sequence FEAKFKRSRESP. A compositionally biased stretch (low complexity) spans 2349–2358; it reads LSRGLRLLSR. The segment covering 2359-2375 has biased composition (basic and acidic residues); that stretch reads SRSEERGPFRGAEDDGI. Serine 2379 is modified (phosphoserine). At threonine 2383 the chain carries Phosphothreonine. Over residues 2387-2398 the composition is skewed to basic and acidic residues; the sequence is LVRRPERSRSVQ. A phosphoserine mark is found at serine 2413, serine 2417, serine 2441, serine 2442, serine 2447, and serine 2451. Residues 2461–2487 are compositionally biased toward low complexity; it reads SSTLERLSSRLQRSGSSEDSGGASGRS. Residues 2513–2523 show a composition bias toward polar residues; the sequence is QLGSQTGATTP. Phosphoserine is present on residues serine 2524 and serine 2527. Positions 2524 to 2543 are enriched in low complexity; sequence SAESLGSEASGTSGSSAPGE. Over residues 2546–2557 the composition is skewed to basic residues; that stretch reads SRHRWGLSRLRK. Serine 2562 carries the post-translational modification Phosphoserine. Polar residues predominate over residues 2562–2571; sequence SQPNLSSSVQ. The region spanning 2586–2676 is the Ig-like 9 domain; that stretch reads PPVFHIKLKD…GSITSSCTVA (91 aa). Cysteine 2608 and cysteine 2660 form a disulfide bridge. The 95-residue stretch at 2683 to 2777 folds into the Fibronectin type-III 2 domain; sequence KLAPPEVPQT…KVFIRGTPDS (95 aa). 3 disordered regions span residues 2756-2832, 2857-2899, and 2912-2960; these read RAGQ…MSAN, ATQQ…PAPS, and APPA…PQKP. Threonine 2774 is modified (phosphothreonine). Composition is skewed to low complexity over residues 2775–2789 and 2803–2831; these read PDSP…RDAP and PTSL…SMSA. Position 2777 is a phosphoserine (serine 2777). The region spanning 2865-2968 is the Fibronectin type-III 3 domain; the sequence is PPSIVVTPSE…KPYTFLEEKA (104 aa). The segment covering 2883–2899 has biased composition (polar residues); that stretch reads GTLTPTSSPQGVKPAPS. Over residues 2913 to 2927 the composition is skewed to pro residues; the sequence is PPAPQAPAPEPPPEP. Positions 2943-2953 are enriched in polar residues; that stretch reads SSPTPESTTLR. Residue serine 2944 is modified to Phosphoserine. The Protein kinase 2 domain maps to 2946–3213; the sequence is TPESTTLRQG…LQDCLAHPWL (268 aa). Aspartate 3080 functions as the Proton acceptor in the catalytic mechanism.

It belongs to the protein kinase superfamily. CAMK Ser/Thr protein kinase family. As to quaternary structure, interacts with MTM1. Isoform 3 is found as a monomer or homodimer. May be autophosphorylated. Isoform 1 is preferentially expressed in striated muscle. Non-kinase form such as isoform 3 is predominantly expressed in the aorta. Isoform 3 appears to be expressed only in highly differentiated ASMC in normal vessel walls and down-regulated in dedifferentiated ASMC in vivo. In response to vascular injuries ASMC dedifferentiate and change from a quiescent and contractile phenotype to a proliferative and synthetic phenotype. This proliferation of vascular smooth muscle cells is one of the most prominent features of atherosclerosis. Isoform 1 and isoform 4 are expressed in cardiomyocytes of the developing heart.

Its subcellular location is the nucleus. The catalysed reaction is L-seryl-[protein] + ATP = O-phospho-L-seryl-[protein] + ADP + H(+). It carries out the reaction L-threonyl-[protein] + ATP = O-phospho-L-threonyl-[protein] + ADP + H(+). In terms of biological role, isoform 3 may have a role in regulating the growth and differentiation of arterial smooth muscle cells. The sequence is that of Striated muscle-specific serine/threonine-protein kinase (Speg) from Mus musculus (Mouse).